The sequence spans 665 residues: MTVKEKIEQLRLQLHQHNYNYYVLNAPEISDKEFDDLMRELQDLEQEHPEYKDENSPTMRVGSDINKNFTQVAHKYPMLSLSNTYSENEVTDFYDRVRKALNEDFEICCEMKYDGTSISLTYENGKLIRAVTRGDGEKGDDVTDNVKTIRSIPLVLHGDNYPEVFEIRGEILMPWEVFEALNREKEAREEPLFANPRNAASGTLKLQNSAIVASRKLDAYLYYLLGDNLPTDGHYENLQEAAKWGFKISPLMRKCQTLQEVFDFINYWDVERKNLNVATDGIVLKVNSLKQQRNLGFTAKSPRWAIAYKFQAERALTRLNMVTYQVGRTGAVTPVANLDPVQLSGTVVKRASLHNADIIEGLDLHIGDMVYVEKGGEIIPKITGVDTSVRFMIGEKVKFITHCPECGSKLIRYEGEAAHYCPNETACPPQIKGKIEHFISRKAMNIDGLGPETVDMFYRLGLIHDTADLYQLTTDDIRGLDRMGDKSAENIIKGIMQSKEVPFERVIFALGIRFVGETVAKKIAKSFKDIEELENADLETLINIDEIGEKIARSILNYFANESNRKLVDRLKTAGLQLYRPEEDLSGHTDKLAGQSIVISGVFTHHSRDEYKDLIEKHGGKNVGSISSKTSFILAGDNMGPAKLEKASKLGIKIMNEEEFLKLIS.

NAD(+)-binding positions include 31-35 (DKEFD), 80-81 (SL), and E110. K112 functions as the N6-AMP-lysine intermediate in the catalytic mechanism. Positions 133, 170, 285, and 309 each coordinate NAD(+). Zn(2+) contacts are provided by C403, C406, C421, and C427. A BRCT domain is found at 587-665 (GHTDKLAGQS…NEEEFLKLIS (79 aa)).

This sequence belongs to the NAD-dependent DNA ligase family. LigA subfamily. Mg(2+) serves as cofactor. The cofactor is Mn(2+).

The catalysed reaction is NAD(+) + (deoxyribonucleotide)n-3'-hydroxyl + 5'-phospho-(deoxyribonucleotide)m = (deoxyribonucleotide)n+m + AMP + beta-nicotinamide D-nucleotide.. Its function is as follows. DNA ligase that catalyzes the formation of phosphodiester linkages between 5'-phosphoryl and 3'-hydroxyl groups in double-stranded DNA using NAD as a coenzyme and as the energy source for the reaction. It is essential for DNA replication and repair of damaged DNA. The polypeptide is DNA ligase (Bacteroides fragilis (strain ATCC 25285 / DSM 2151 / CCUG 4856 / JCM 11019 / LMG 10263 / NCTC 9343 / Onslow / VPI 2553 / EN-2)).